A 381-amino-acid chain; its full sequence is Probable serine/threonine-protein kinase PBL21 (381 aa).

Cys-3 is lipidated: S-palmitoyl cysteine. Positions 78 to 354 (FREVNLLGEG…GDIVVALEYL (277 aa)) constitute a Protein kinase domain. ATP-binding positions include 84–92 (LGEGGFGRV) and Lys-106. Asp-204 (proton acceptor) is an active-site residue. The disordered stretch occupies residues 362-381 (EARNVSSPSPEISRTPRRDL).

The protein belongs to the protein kinase superfamily. Ser/Thr protein kinase family. Palmitoylation at Cys-3 and Cys-7 are required for plasma membrane location.

The protein resides in the cell membrane. The catalysed reaction is L-seryl-[protein] + ATP = O-phospho-L-seryl-[protein] + ADP + H(+). It catalyses the reaction L-threonyl-[protein] + ATP = O-phospho-L-threonyl-[protein] + ADP + H(+). Functionally, may be involved in plant defense signaling. The protein is Probable serine/threonine-protein kinase PBL21 of Arabidopsis thaliana (Mouse-ear cress).